The sequence spans 255 residues: UPF0246 protein CC_3385 (255 aa).

This sequence belongs to the UPF0246 family.

The polypeptide is UPF0246 protein CC_3385 (Caulobacter vibrioides (strain ATCC 19089 / CIP 103742 / CB 15) (Caulobacter crescentus)).